Consider the following 346-residue polypeptide: Very-long-chain 3-oxoacyl-CoA reductase (346 aa).

Residues 23–43 (AAWIVFGLGISKMVFLTLNFS) form a helical membrane-spanning segment. 7 residues coordinate NADP(+): Val69, Asp123, Asn150, Tyr222, Lys226, Val255, and Ser257. The Proton donor role is filled by Tyr222. Lys226 acts as the Lowers pKa of active site Tyr in catalysis.

Belongs to the short-chain dehydrogenases/reductases (SDR) family.

The protein localises to the endoplasmic reticulum membrane. The enzyme catalyses a very-long-chain (3R)-3-hydroxyacyl-CoA + NADP(+) = a very-long-chain 3-oxoacyl-CoA + NADPH + H(+). The protein operates within lipid metabolism; fatty acid biosynthesis. Functionally, component of the microsomal membrane bound fatty acid elongation system, which produces the 26-carbon very long-chain fatty acids (VLCFA) from palmitate. Catalyzes the reduction of the 3-ketoacyl-CoA intermediate that is formed in each cycle of fatty acid elongation. VLCFAs serve as precursors for ceramide and sphingolipids. This is Very-long-chain 3-oxoacyl-CoA reductase from Kluyveromyces lactis (strain ATCC 8585 / CBS 2359 / DSM 70799 / NBRC 1267 / NRRL Y-1140 / WM37) (Yeast).